A 559-amino-acid polypeptide reads, in one-letter code: (-)-drimenol synthase (559 aa).

The Mg(2+) site is built by Asp311, Asp315, Asp456, Ser460, and Glu464. A DDXXD motif motif is present at residues 311–315 (DDIYD).

This sequence belongs to the terpene synthase family. It depends on Mg(2+) as a cofactor.

It catalyses the reaction (2E,6E)-farnesyl diphosphate + H2O = (5S,9S,10S)-drim-7-en-11-ol + diphosphate. It functions in the pathway secondary metabolite biosynthesis; terpenoid biosynthesis. Functionally, catalyzes the conversion of (2E,6E)-farnesyl diphosphate (FPP) into drimenol, a precursor of the sesquiterpenoid polygodial. Polygodial has been shown to be an antifeedant for a number of herbivorous insects. In Persicaria hydropiper (Marshpepper knotweed), this protein is (-)-drimenol synthase.